The following is a 542-amino-acid chain: MAVKEIKYYAEAREKIMAGVDTLADAVKVTLGPRGRNVVLEKSWGPPTVTKDGVTVAKEIDLEDKFENMGAQMVKEVASKTSDVAGDGTTTATILAQAIYRAGSKLVSAGHNPMALKRGIELAVAAAVRELRNMSKPTKDQKEIAQVGTISANNDVAIGDIIAEAMNKVGKEGVITVEEAKSMETTLEVVEGMQFDRGYVSPYFVTDPERMEVVLEDPYILINEKKISNMKDLLPVLEQIAKMGAPLLIVAEDVEGEALATLVVNKLRGTLKVSAVKAPGFGDRRKAMLEDLAVLTGGKVVSEDIGVKLENVSLQDLGRAKTVRIDKDNTTIVDGAGARSAIEARVKQIRAQIDETTSDYDREKLQERLAKIVGGVAVVRVGAATETEMKEKKARVEDALNATRAAVEEGIVPGGGVALLRCLPALEKLDLHGEDAFGVKIVMRALEEPVRQIANNAGHEGSVVVQQVKQGTGSHGFNADTEVYEDLSAAGVIDPTKVVRFALQNAASVASLLLTTEAMIAEKPKKQKPAPAMPGAGMEDMY.

ATP contacts are provided by residues 30–33 (TLGP), K51, 87–91 (DGTTT), G415, and D494.

Belongs to the chaperonin (HSP60) family. As to quaternary structure, forms a cylinder of 14 subunits composed of two heptameric rings stacked back-to-back. Interacts with the co-chaperonin GroES.

Its subcellular location is the cytoplasm. It carries out the reaction ATP + H2O + a folded polypeptide = ADP + phosphate + an unfolded polypeptide.. Its function is as follows. Together with its co-chaperonin GroES, plays an essential role in assisting protein folding. The GroEL-GroES system forms a nano-cage that allows encapsulation of the non-native substrate proteins and provides a physical environment optimized to promote and accelerate protein folding. In Syntrophobacter fumaroxidans (strain DSM 10017 / MPOB), this protein is Chaperonin GroEL 2.